The following is a 258-amino-acid chain: Ribosomal RNA small subunit methyltransferase J (258 aa).

Residues 106 to 107 (RD), 122 to 123 (ER), and Asp181 each bind S-adenosyl-L-methionine.

The protein belongs to the methyltransferase superfamily. RsmJ family.

It localises to the cytoplasm. It catalyses the reaction guanosine(1516) in 16S rRNA + S-adenosyl-L-methionine = N(2)-methylguanosine(1516) in 16S rRNA + S-adenosyl-L-homocysteine + H(+). Functionally, specifically methylates the guanosine in position 1516 of 16S rRNA. This is Ribosomal RNA small subunit methyltransferase J from Pseudoalteromonas atlantica (strain T6c / ATCC BAA-1087).